Consider the following 164-residue polypeptide: Pleckstrin homology domain-containing family J member 1 (164 aa).

The 94-residue stretch at 15–108 (PAEMAAELGM…WMEALQRASY (94 aa)) folds into the PH domain.

This is Pleckstrin homology domain-containing family J member 1 (Plekhj1) from Mus musculus (Mouse).